Consider the following 370-residue polypeptide: Serine/threonine-protein kinase SAPK5 (370 aa).

The 257-residue stretch at Y4–F260 folds into the Protein kinase domain. Residues I10 to A18 and K33 contribute to the ATP site. Catalysis depends on D123, which acts as the Proton acceptor. Residues E312–S370 are disordered. Over residues T330–Y349 the composition is skewed to acidic residues. The span at D350–V360 shows a compositional bias: basic and acidic residues.

The protein belongs to the protein kinase superfamily. Ser/Thr protein kinase family. In terms of processing, may be phosphorylated. In terms of tissue distribution, expressed in leaf blades, leaf sheaths and roots. Expressed in shoots and roots of young seedlings.

The protein localises to the cytoplasm. Its subcellular location is the nucleus. The catalysed reaction is L-seryl-[protein] + ATP = O-phospho-L-seryl-[protein] + ADP + H(+). The enzyme catalyses L-threonyl-[protein] + ATP = O-phospho-L-threonyl-[protein] + ADP + H(+). Activated by hyperosmotic stress. In terms of biological role, may play a role in signal transduction of hyperosmotic response. In Oryza sativa subsp. japonica (Rice), this protein is Serine/threonine-protein kinase SAPK5 (SAPK5).